The primary structure comprises 140 residues: UPF0102 protein alr1796 (140 aa).

It belongs to the UPF0102 family.

This chain is UPF0102 protein alr1796, found in Nostoc sp. (strain PCC 7120 / SAG 25.82 / UTEX 2576).